The following is a 442-amino-acid chain: Probable glycine dehydrogenase (decarboxylating) subunit 1 (442 aa).

Belongs to the GcvP family. N-terminal subunit subfamily. The glycine cleavage system is composed of four proteins: P, T, L and H. In this organism, the P 'protein' is a heterodimer of two subunits.

The enzyme catalyses N(6)-[(R)-lipoyl]-L-lysyl-[glycine-cleavage complex H protein] + glycine + H(+) = N(6)-[(R)-S(8)-aminomethyldihydrolipoyl]-L-lysyl-[glycine-cleavage complex H protein] + CO2. In terms of biological role, the glycine cleavage system catalyzes the degradation of glycine. The P protein binds the alpha-amino group of glycine through its pyridoxal phosphate cofactor; CO(2) is released and the remaining methylamine moiety is then transferred to the lipoamide cofactor of the H protein. The protein is Probable glycine dehydrogenase (decarboxylating) subunit 1 of Phenylobacterium zucineum (strain HLK1).